The sequence spans 753 residues: 5-methyltetrahydropteroyltriglutamate--homocysteine methyltransferase (753 aa).

5-methyltetrahydropteroyltri-L-glutamate contacts are provided by residues 17–20 and lysine 117; that span reads RELK. L-homocysteine contacts are provided by residues 431–433 and glutamate 484; that span reads IGS. Residues 431–433 and glutamate 484 contribute to the L-methionine site; that span reads IGS. Residues 515–516 and tryptophan 561 each bind 5-methyltetrahydropteroyltri-L-glutamate; that span reads RC. Residue aspartate 599 coordinates L-homocysteine. Aspartate 599 serves as a coordination point for L-methionine. Glutamate 605 is a 5-methyltetrahydropteroyltri-L-glutamate binding site. Residues histidine 641, cysteine 643, and glutamate 665 each contribute to the Zn(2+) site. The Proton donor role is filled by histidine 694. Residue cysteine 726 participates in Zn(2+) binding.

This sequence belongs to the vitamin-B12 independent methionine synthase family. Requires Zn(2+) as cofactor.

It carries out the reaction 5-methyltetrahydropteroyltri-L-glutamate + L-homocysteine = tetrahydropteroyltri-L-glutamate + L-methionine. The protein operates within amino-acid biosynthesis; L-methionine biosynthesis via de novo pathway; L-methionine from L-homocysteine (MetE route): step 1/1. In terms of biological role, catalyzes the transfer of a methyl group from 5-methyltetrahydrofolate to homocysteine resulting in methionine formation. The chain is 5-methyltetrahydropteroyltriglutamate--homocysteine methyltransferase from Escherichia coli O7:K1 (strain IAI39 / ExPEC).